A 449-amino-acid chain; its full sequence is Delta(8)-fatty-acid desaturase 1 (449 aa).

In terms of domain architecture, Cytochrome b5 heme-binding spans 7-91 (KKYITNEDLK…IRDFQVSEVS (85 aa)). Heme contacts are provided by histidine 42 and histidine 65. Transmembrane regions (helical) follow at residues 113–133 (VTLYTLAFVAAMFLGVLYGVL) and 138–158 (VFAHQIAAALLGLLWIQSAYI). Positions 160–164 (HDSGH) match the Histidine box-1 motif. A helical membrane pass occupies residues 173–195 (YNRFAQLLSGNCLTGISIAWWKW). A Histidine box-2 motif is present at residues 197 to 201 (HNAHH). The next 3 membrane-spanning stretches (helical) occupy residues 255–275 (YYPVMCFGRINLFIQTFLLLF), 284–304 (ALNFAGILVFWTWFPLLVSCL), and 311–331 (FFFVFTSFTVTALQHIQFTLN). A Histidine box-3 motif is present at residues 374-378 (QLEHH).

Belongs to the fatty acid desaturase type 1 family. Requires Fe cation as cofactor. In terms of tissue distribution, highly expressed in flowers. Expressed in roots, leaves, stems and siliques.

It localises to the endoplasmic reticulum membrane. The enzyme catalyses an N-acyl-(4R)-4-hydroxysphinganine + 2 Fe(II)-[cytochrome b5] + O2 + 2 H(+) = a (4R,8E)-4-hydroxysphingenine ceramide + 2 Fe(III)-[cytochrome b5] + 2 H2O. It carries out the reaction an N-acyl-(4R)-4-hydroxysphinganine + 2 Fe(II)-[cytochrome b5] + O2 + 2 H(+) = a (4R,8Z)-4-hydroxysphing-8-enine ceramide + 2 Fe(III)-[cytochrome b5] + 2 H2O. Plays a major role as delta(8)-fatty-acid desaturase which introduces a double bond at the 8-position in the long-chain base (LCB) of ceramides with or without a hydroxy group at the 4-position. The enzyme produces both the 8E and 8Z isomers (in a 4:1 ratio). This structural modification contributes to the quantitative partitioning of ceramides between the two major sphingolipid classes, glucosylceramides and glycosylinositolphosphoryl ceramides. Sphingolipids are important membrane components involved in environmental stress responses, such as resistance to chilling, and act as cell signaling molecules. This Arabidopsis thaliana (Mouse-ear cress) protein is Delta(8)-fatty-acid desaturase 1 (SLD1).